Here is a 303-residue protein sequence, read N- to C-terminus: BAG family molecular chaperone regulator 3 (303 aa).

Residues 1–11 (MMKMNTGTSPS) show a composition bias toward polar residues. The disordered stretch occupies residues 1–27 (MMKMNTGTSPSVIGGGTSGNEWESRPG). A Ubiquitin-like domain is found at 45 to 119 (FRVRVKYGSV…LVVKEDPISQ (75 aa)). The region spanning 138-216 (SISDISFEVD…KYVEALDLLK (79 aa)) is the BAG domain. Residues 249–268 (VEEEEEEPRNSNASSSSGTP) are disordered. Over residues 258–267 (NSNASSSSGT) the composition is skewed to polar residues. Position 263 is a phosphoserine (Ser-263).

Binds to the ATPase domain of HSP70/HSC70 chaperones. Interacts with HSP70-1.

Co-chaperone that regulates diverse cellular pathways, such as programmed cell death and stress responses. This Arabidopsis thaliana (Mouse-ear cress) protein is BAG family molecular chaperone regulator 3 (BAG3).